A 205-amino-acid chain; its full sequence is Glycerol-3-phosphate acyltransferase (205 aa).

The Periplasmic portion of the chain corresponds to Met1–Ala3. The helical transmembrane segment at Ile4–Val24 threads the bilayer. Residues Cys25 to Lys52 are Cytoplasmic-facing. Residues Gly53 to Ala73 traverse the membrane as a helical segment. At Tyr74 to Pro80 the chain is on the periplasmic side. The helical transmembrane segment at Phe81–Gly101 threads the bilayer. Over Phe102–Ala111 the chain is Cytoplasmic. Residues Phe112–Leu132 traverse the membrane as a helical segment. At Thr133 to Ser137 the chain is on the periplasmic side. Residues Gly138–Phe158 traverse the membrane as a helical segment. The Cytoplasmic portion of the chain corresponds to Lys159–Glu205.

Belongs to the PlsY family. As to quaternary structure, probably interacts with PlsX.

It localises to the cell inner membrane. The enzyme catalyses sn-glycerol 3-phosphate + an acyl-CoA = a 1-acyl-sn-glycero-3-phosphate + CoA. The catalysed reaction is a fatty acyl-[ACP] + sn-glycerol 3-phosphate = a 1-acyl-sn-glycero-3-phosphate + holo-[ACP]. The protein operates within lipid metabolism; phospholipid metabolism. Its function is as follows. Catalyzes the transfer of an acyl group from acyl-ACP to glycerol-3-phosphate (G3P) to form lysophosphatidic acid (LPA). This enzyme can also utilize acyl-CoA as fatty acyl donor, but not acyl-PO(4). This Shigella flexneri serotype 5b (strain 8401) protein is Glycerol-3-phosphate acyltransferase.